We begin with the raw amino-acid sequence, 340 residues long: N(4)-(Beta-N-acetylglucosaminyl)-L-asparaginase (340 aa).

The N-terminal stretch at 1–45 is a signal peptide; that stretch reads MRIIYKQQTMNNNRRDFIKKLGIATAAIAINPLEAKNLLDTSEPK. Residue Thr197 is the Nucleophile of the active site. Residues 225–228 and 248–251 each bind substrate; these read RVGD and TGHG.

The protein belongs to the Ntn-hydrolase family. Heterotetramer of two alpha and two beta chains arranged as a dimer of alpha/beta heterodimers. Post-translationally, cleaved into an alpha and beta chain by autocatalysis; this activates the enzyme. The N-terminal residue of the beta subunit is responsible for the nucleophile hydrolase activity.

It is found in the periplasm. The catalysed reaction is N(4)-(beta-N-acetyl-D-glucosaminyl)-L-asparagine + H2O = N-acetyl-beta-D-glucosaminylamine + L-aspartate + H(+). Functionally, cleaves the GlcNAc-Asn bond which joins oligosaccharides to the peptide of asparagine-linked glycoproteins. Requires that the glycosylated asparagine moiety is not substituted on its N-(R1) and C- (R2) terminus. In Elizabethkingia miricola (Chryseobacterium miricola), this protein is N(4)-(Beta-N-acetylglucosaminyl)-L-asparaginase.